The primary structure comprises 1329 residues: Putative protein tag-53 (1329 aa).

The region spanning 65 to 92 (SCDKPCYNGVCLNKACVCSKGWYGSQCD) is the EGF-like 1 domain. 5 disulfides stabilise this stretch: C66–C75, C70–C80, C82–C91, C94–C120, and C144–C166. Positions 94–203 (CFGRIRISDN…NGFNVSYESN (110 aa)) constitute a CUB domain. An N-linked (GlcNAc...) asparagine glycan is attached at N103. N-linked (GlcNAc...) asparagine glycosylation is found at N197 and N208. EGF-like domains lie at 204-232 (RCAY…LNCE) and 235-270 (VCQL…ETCQ). 6 disulfides stabilise this stretch: C205–C215, C209–C220, C222–C231, C236–C252, C247–C257, and C259–C269. 6 Kelch repeats span residues 302–353 (VVWS…KYKN), 355–408 (LYMF…VAGH), 416–463 (EMFV…AVEY), 471–518 (AILV…YLNG), 520–575 (MVVV…VIGQ), and 577–619 (LYAL…KCVF). 6 N-linked (GlcNAc...) asparagine glycosylation sites follow: N324, N395, N447, N481, N529, and N555. The N-linked (GlcNAc...) asparagine glycan is linked to N820. N-linked (GlcNAc...) asparagine; atypical glycosylation occurs at N832. 2 N-linked (GlcNAc...) asparagine glycosylation sites follow: N833 and N934. Disulfide bonds link C945–C953, C947–C968, C971–C980, C983–C997, C1000–C1009, C1002–C1016, C1018–C1028, and C1031–C1045. Laminin EGF-like domains lie at 945–999 (CQCN…VCSP) and 1000–1047 (CDCH…PCFY). Residues 952–998 (TCFTSVGSFPPVTIEKCQSCQNHTTGAHCERCAPGFYGDARNGGVCS) form the EGF-like 4 domain. N973 carries N-linked (GlcNAc...) asparagine glycosylation. Residues N1066, N1102, and N1147 are each glycosylated (N-linked (GlcNAc...) asparagine). A helical transmembrane segment spans residues 1176 to 1196 (VLFFVIFAACFIVLLVVAGLL). The Cytoplasmic segment spans residues 1197–1329 (WMIKVRIEAY…TIRQRPNNND (133 aa)).

The protein localises to the membrane. The polypeptide is Putative protein tag-53 (tag-53) (Caenorhabditis elegans).